A 103-amino-acid chain; its full sequence is Large ribosomal subunit protein bL21 (103 aa).

Belongs to the bacterial ribosomal protein bL21 family. Part of the 50S ribosomal subunit. Contacts protein L20.

This protein binds to 23S rRNA in the presence of protein L20. The polypeptide is Large ribosomal subunit protein bL21 (Burkholderia mallei (strain NCTC 10247)).